A 91-amino-acid polypeptide reads, in one-letter code: DNA-directed RNA polymerase subunit omega (91 aa).

This sequence belongs to the RNA polymerase subunit omega family. In terms of assembly, the RNAP catalytic core consists of 2 alpha, 1 beta, 1 beta' and 1 omega subunit. When a sigma factor is associated with the core the holoenzyme is formed, which can initiate transcription.

The catalysed reaction is RNA(n) + a ribonucleoside 5'-triphosphate = RNA(n+1) + diphosphate. In terms of biological role, promotes RNA polymerase assembly. Latches the N- and C-terminal regions of the beta' subunit thereby facilitating its interaction with the beta and alpha subunits. The polypeptide is DNA-directed RNA polymerase subunit omega (Pectobacterium carotovorum subsp. carotovorum (strain PC1)).